Reading from the N-terminus, the 168-residue chain is SPbeta prophage-derived uncharacterized protein YomW (168 aa).

This chain is SPbeta prophage-derived uncharacterized protein YomW (yomW), found in Bacillus subtilis (strain 168).